The following is a 546-amino-acid chain: Membrane protein insertase YidC (546 aa).

The chain crosses the membrane as a helical span at residues 8 to 28; that stretch reads ILLATVLSVGILILWQVIFPT. The interval 31 to 70 is disordered; that stretch reads VPPKPAPPPAAEVAKPAAPASPAPGAAAPAVPAPPPDAPE. Over residues 41–60 the composition is skewed to low complexity; it reads AEVAKPAAPASPAPGAAAPA. A run of 5 helical transmembrane segments spans residues 326–346, 356–376, 422–442, 459–479, and 498–518; these read IDYG…LYVM, WGVA…PLTY, LGGC…YAAL, LTAH…SFVM, and FFPG…TLYI.

Belongs to the OXA1/ALB3/YidC family. Type 1 subfamily. In terms of assembly, interacts with the Sec translocase complex via SecD. Specifically interacts with transmembrane segments of nascent integral membrane proteins during membrane integration.

It localises to the cell inner membrane. In terms of biological role, required for the insertion and/or proper folding and/or complex formation of integral membrane proteins into the membrane. Involved in integration of membrane proteins that insert both dependently and independently of the Sec translocase complex, as well as at least some lipoproteins. Aids folding of multispanning membrane proteins. The polypeptide is Membrane protein insertase YidC (Anaeromyxobacter sp. (strain K)).